The following is a 372-amino-acid chain: DNA damage-repair/toleration protein DRT100 (372 aa).

A signal peptide spans 1–26 (MRKLLASPFSSLLAVVFISVISVVRC). 9 LRR repeats span residues 136–158 (SLRILDLAGNKITGEIPAEIGKL), 160–183 (KLAVLNLAENQMSGEIPASLTSLI), 184–205 (ELKHLELTENGITGVIPADFGS), 208–230 (MLSRVLLGRNELTGSIPESISGM), 232–254 (RLADLDLSKNHIEGPIPEWMGNM), 256–277 (VLSLLNLDCNSLTGPIPGSLLS), 280–302 (GLDVANLSRNALEGTIPDVFGSK), 304–326 (YLVSLDLSHNSLSGRIPDSLSSA), and 328–350 (FVGHLDISHNKLCGRIPTGFPFD).

Its function is as follows. This protein is able to complement bacterial recA mutations, but its native function in the plant is not known. The polypeptide is DNA damage-repair/toleration protein DRT100 (DRT100) (Arabidopsis thaliana (Mouse-ear cress)).